The chain runs to 103 residues: Phosphoribosyl-ATP pyrophosphatase (103 aa).

It belongs to the PRA-PH family.

The protein resides in the cytoplasm. The enzyme catalyses 1-(5-phospho-beta-D-ribosyl)-ATP + H2O = 1-(5-phospho-beta-D-ribosyl)-5'-AMP + diphosphate + H(+). It functions in the pathway amino-acid biosynthesis; L-histidine biosynthesis; L-histidine from 5-phospho-alpha-D-ribose 1-diphosphate: step 2/9. The protein is Phosphoribosyl-ATP pyrophosphatase (hisE) of Rhodobacter capsulatus (strain ATCC BAA-309 / NBRC 16581 / SB1003).